A 230-amino-acid polypeptide reads, in one-letter code: uncharacterized protein (230 aa).

Transmembrane regions (helical) follow at residues 8-28, 45-65, 72-92, 109-129, 141-161, 176-196, and 203-223; these read SLILTALIGGIPSSTAVTMAF, SIILSWLVMFFRVIFYTFIIF, LVLLLLPYFALLLMFAIFLYL, PFSLSQAFTFGLIYSTISVIS, IYVLSFLSGIMDIDAITLLLA, MGILLAVMSNNLFKSGYAIIF, and IYFLFVALFTLIYTTTLLILF.

To P.aeruginosa PA0043 and M.thermoautotrophicum MTH1451.

It is found in the cell membrane. This is an uncharacterized protein from Aquifex aeolicus (strain VF5).